We begin with the raw amino-acid sequence, 487 residues long: Acetyl-coenzyme A carboxylase carboxyl transferase subunit beta, chloroplastic (487 aa).

In terms of domain architecture, CoA carboxyltransferase N-terminal spans 223-487 (LWVQCENCYG…LHAFFPLNQN (265 aa)). 4 residues coordinate Zn(2+): C227, C230, C246, and C249. Residues 227–249 (CENCYGLNYKKSFKSKMNLCEQC) form a C4-type zinc finger.

This sequence belongs to the AccD/PCCB family. As to quaternary structure, acetyl-CoA carboxylase is a heterohexamer composed of biotin carboxyl carrier protein, biotin carboxylase and 2 subunits each of ACCase subunit alpha and ACCase plastid-coded subunit beta (accD). Zn(2+) is required as a cofactor.

The protein localises to the plastid. It localises to the chloroplast stroma. It catalyses the reaction N(6)-carboxybiotinyl-L-lysyl-[protein] + acetyl-CoA = N(6)-biotinyl-L-lysyl-[protein] + malonyl-CoA. Its pathway is lipid metabolism; malonyl-CoA biosynthesis; malonyl-CoA from acetyl-CoA: step 1/1. Its function is as follows. Component of the acetyl coenzyme A carboxylase (ACC) complex. Biotin carboxylase (BC) catalyzes the carboxylation of biotin on its carrier protein (BCCP) and then the CO(2) group is transferred by the transcarboxylase to acetyl-CoA to form malonyl-CoA. This is Acetyl-coenzyme A carboxylase carboxyl transferase subunit beta, chloroplastic from Panax ginseng (Korean ginseng).